Reading from the N-terminus, the 138-residue chain is Ribulose bisphosphate carboxylase small subunit (138 aa).

This sequence belongs to the RuBisCO small chain family. Heterohexadecamer of 8 large and 8 small subunits.

It is found in the plastid. The protein resides in the chloroplast. Its function is as follows. RuBisCO catalyzes two reactions: the carboxylation of D-ribulose 1,5-bisphosphate, the primary event in carbon dioxide fixation, as well as the oxidative fragmentation of the pentose substrate in the photorespiration process. Both reactions occur simultaneously and in competition at the same active site. Although the small subunit is not catalytic it is essential for maximal activity. This chain is Ribulose bisphosphate carboxylase small subunit, found in Porphyra purpurea (Red seaweed).